A 373-amino-acid polypeptide reads, in one-letter code: Histidinol-phosphate aminotransferase (373 aa).

Residues 1–10 (MTGVPGSSIT) show a composition bias toward polar residues. Residues 1-45 (MTGVPGSSITLDDLPLRDDLRGKSPYGAPQLSVPVRLNTNENPHP) form a disordered region. K237 carries the N6-(pyridoxal phosphate)lysine modification.

The protein belongs to the class-II pyridoxal-phosphate-dependent aminotransferase family. Histidinol-phosphate aminotransferase subfamily. As to quaternary structure, homodimer. The cofactor is pyridoxal 5'-phosphate.

The enzyme catalyses L-histidinol phosphate + 2-oxoglutarate = 3-(imidazol-4-yl)-2-oxopropyl phosphate + L-glutamate. Its pathway is amino-acid biosynthesis; L-histidine biosynthesis; L-histidine from 5-phospho-alpha-D-ribose 1-diphosphate: step 7/9. This chain is Histidinol-phosphate aminotransferase, found in Mycolicibacterium vanbaalenii (strain DSM 7251 / JCM 13017 / BCRC 16820 / KCTC 9966 / NRRL B-24157 / PYR-1) (Mycobacterium vanbaalenii).